A 487-amino-acid chain; its full sequence is UDP-glycosyltransferase 72E1 (487 aa).

The active-site Proton acceptor is H18. An anthocyanidin is bound at residue H18. D116 (charge relay) is an active-site residue. Positions 351, 353, 368, 371, 372, 373, and 376 each coordinate UDP-alpha-D-glucose. A391 serves as a coordination point for an anthocyanidin. UDP-alpha-D-glucose contacts are provided by E392 and Q393.

Belongs to the UDP-glycosyltransferase family. As to quaternary structure, interacts with SIS8. In terms of tissue distribution, expressed in seedlings, roots and leaves.

It localises to the nucleus. The catalysed reaction is (E)-coniferaldehyde + UDP-alpha-D-glucose = 4-O-(beta-D-glucosyl)-4-(E)-coniferyl aldehyde + UDP + H(+). The enzyme catalyses (E)-sinapaldehyde + UDP-alpha-D-glucose = 4-O-(beta-D-glucosyl)-4-trans-sinapoyl aldehyde + UDP + H(+). Its function is as follows. UDP-glycosyltransferase that glucosylates coniferyl aldehyde to form coniferyl aldehyde 4-O-glucoside. Glucosylates sinapyl aldehyde to form sinapyl aldehyde 4-O-glucoside. Is not active in presence of coniferyl alcohol or sinapyl alcohol. Can glucosylate the phytotoxic xenobiotic compound 2,4,5-trichlorophenol (TCP). This is UDP-glycosyltransferase 72E1 from Arabidopsis thaliana (Mouse-ear cress).